Here is a 319-residue protein sequence, read N- to C-terminus: Lipoyl synthase (319 aa).

The interval 6-29 (DTVSANPVRPRHPEKAARPDALSP) is disordered. The segment covering 16–29 (RHPEKAARPDALSP) has biased composition (basic and acidic residues). [4Fe-4S] cluster-binding residues include cysteine 61, cysteine 66, cysteine 72, cysteine 87, cysteine 91, cysteine 94, and serine 300. Residues 73–289 (WDKKHATFMI…QTTAYAKGFL (217 aa)) form the Radical SAM core domain.

This sequence belongs to the radical SAM superfamily. Lipoyl synthase family. Requires [4Fe-4S] cluster as cofactor.

The protein resides in the cytoplasm. It catalyses the reaction [[Fe-S] cluster scaffold protein carrying a second [4Fe-4S](2+) cluster] + N(6)-octanoyl-L-lysyl-[protein] + 2 oxidized [2Fe-2S]-[ferredoxin] + 2 S-adenosyl-L-methionine + 4 H(+) = [[Fe-S] cluster scaffold protein] + N(6)-[(R)-dihydrolipoyl]-L-lysyl-[protein] + 4 Fe(3+) + 2 hydrogen sulfide + 2 5'-deoxyadenosine + 2 L-methionine + 2 reduced [2Fe-2S]-[ferredoxin]. The protein operates within protein modification; protein lipoylation via endogenous pathway; protein N(6)-(lipoyl)lysine from octanoyl-[acyl-carrier-protein]: step 2/2. Functionally, catalyzes the radical-mediated insertion of two sulfur atoms into the C-6 and C-8 positions of the octanoyl moiety bound to the lipoyl domains of lipoate-dependent enzymes, thereby converting the octanoylated domains into lipoylated derivatives. The chain is Lipoyl synthase from Rhodopseudomonas palustris (strain ATCC BAA-98 / CGA009).